The following is a 299-amino-acid chain: MLSAGLGLLMLVAVVEFLIGLIGNGVLVVWSFREWIRKFSWSSYNLIILGLAGCRFVLQWLIILDLSLFPLFQSSRWLRYLSIFWVLVSQASLWFATFLSVFYCKKITTFDHPAYLWLKQRAYNLSLWCLLGYFIINLLLTVQIGLMFYHPPQGNSSIRYPFESWQYLYAFRLNSGSYLPLMVFLVSSGMLIVSLYTHHKKMKVHSAGRRDVRAKAHITALKSLGCFLLLHLVYIMASPFSIASKTYPPDLTSVFIWETLMAAYPSLHSLILIMGIPRVKQTCQKIXWKTVCARRCWGP.

M1 is a topological domain (extracellular). Residues 2-22 (LSAGLGLLMLVAVVEFLIGLI) traverse the membrane as a helical segment. Over 23–45 (GNGVLVVWSFREWIRKFSWSSYN) the chain is Cytoplasmic. A helical transmembrane segment spans residues 46 to 66 (LIILGLAGCRFVLQWLIILDL). The Extracellular segment spans residues 67-82 (SLFPLFQSSRWLRYLS). Residues 83–103 (IFWVLVSQASLWFATFLSVFY) traverse the membrane as a helical segment. Residues 104-127 (CKKITTFDHPAYLWLKQRAYNLSL) are Cytoplasmic-facing. A helical transmembrane segment spans residues 128–148 (WCLLGYFIINLLLTVQIGLMF). Residues 149–175 (YHPPQGNSSIRYPFESWQYLYAFRLNS) lie on the Extracellular side of the membrane. An N-linked (GlcNAc...) asparagine glycan is attached at N155. A helical membrane pass occupies residues 176–196 (GSYLPLMVFLVSSGMLIVSLY). Topologically, residues 197–223 (THHKKMKVHSAGRRDVRAKAHITALKS) are cytoplasmic. Residues 224 to 244 (LGCFLLLHLVYIMASPFSIAS) form a helical membrane-spanning segment. Residues 245-253 (KTYPPDLTS) lie on the Extracellular side of the membrane. Residues 254-274 (VFIWETLMAAYPSLHSLILIM) traverse the membrane as a helical segment. At 275 to 299 (GIPRVKQTCQKIXWKTVCARRCWGP) the chain is on the cytoplasmic side.

This sequence belongs to the G-protein coupled receptor T2R family.

The protein resides in the membrane. Its function is as follows. Receptor that may play a role in the perception of bitterness and is gustducin-linked. May play a role in sensing the chemical composition of the gastrointestinal content. The activity of this receptor may stimulate alpha gustducin, mediate PLC-beta-2 activation and lead to the gating of TRPM5. In Pan troglodytes (Chimpanzee), this protein is Taste receptor type 2 member 5 (TAS2R5).